The chain runs to 133 residues: MSWQTYVDDHLMCDIEGTGQHLTSAAIFGTDGTVWAKSASFPEFKPNEIDAIIKEFNEAGQLAPTGLFLGGAKYMVIQGEAGAVIRGKKGAGGICIKKTGQAMVFGIYDEPVAPGQCNMVVERLGDYLLDQGM.

The cysteines at positions 95 and 117 are disulfide-linked.

It belongs to the profilin family. Dimer and tetramer. Occurs in many kinds of cells as a complex with monomeric actin in a 1:1 ratio.

It is found in the cytoplasm. Its subcellular location is the cytoskeleton. In terms of biological role, binds to actin and affects the structure of the cytoskeleton. At high concentrations, profilin prevents the polymerization of actin, whereas it enhances it at low concentrations. By binding to PIP2, it inhibits the formation of IP3 and DG. Possesses high binding affinity for poly(L-proline). This chain is Profilin-1, found in Artemisia vulgaris (Mugwort).